The following is a 125-amino-acid chain: Large ribosomal subunit protein bL12 (125 aa).

Belongs to the bacterial ribosomal protein bL12 family. Homodimer. Part of the 50S ribosomal subunit; present in 6 copies per ribosome. Forms part of the ribosomal stalk which helps the ribosome interact with GTP-bound translation factors. Forms a heptameric L10(L12)2(L12)2(L12)2 complex, where L10 forms an elongated spine to which 3 L12 dimers bind in a sequential fashion.

Functionally, forms part of the ribosomal stalk which helps the ribosome interact with GTP-bound translation factors. Is thus essential for accurate translation. This is Large ribosomal subunit protein bL12 from Agrobacterium fabrum (strain C58 / ATCC 33970) (Agrobacterium tumefaciens (strain C58)).